The sequence spans 629 residues: Coiled-coil domain-containing protein 120 (629 aa).

Positions 31–70 (RLRGLLDRQRALQEALSVKLQELRKVCLQEAELTGQLPPE) are involved in CYTH2-binding. Residues 109 to 173 (ELALEALERE…LRDFRARLGL (65 aa)) adopt a coiled-coil conformation. Composition is skewed to low complexity over residues 209–219 (HSESSSLSESG) and 279–294 (ASPT…SASS). The segment at 209 to 356 (HSESSSLSES…LFAARTRRSN (148 aa)) is disordered. Polar residues predominate over residues 323 to 332 (RQWSGSQDSQ). 2 positions are modified to phosphoserine: Ser-355 and Ser-357. 2 disordered regions span residues 399–432 (QPVP…GAPR) and 602–629 (PSQA…FTDG). Residues 418–432 (ARPSSAAPASRGAPR) show a composition bias toward low complexity. Arg-432 is subject to Omega-N-methylarginine.

Interacts with NIN and CEP170; leading to recruit them to centrosomes. Interacts with CYTH2; this interaction is direct and stabilizes CCDC120, possibly by preventing ubiquitination. In terms of processing, ubiquitinated; interaction with CYTH2 may prevent ubiquitination.

It is found in the cytoplasm. The protein localises to the cytoskeleton. Its subcellular location is the microtubule organizing center. It localises to the centrosome. The protein resides in the centriole. It is found in the cell projection. The protein localises to the neuron projection. Its subcellular location is the growth cone. It localises to the endosome. Centriolar protein required for centriole subdistal appendage assembly and microtubule anchoring in interphase cells. Together with CCDC68, cooperate with subdistal appendage components ODF2, NIN and CEP170 for hierarchical subdistal appendage assembly. Recruits NIN and CEP170 to centrosomes. Also required for neurite growth. Localizes CYTH2 to vesicles to allow its transport along neurites, and subsequent ARF6 activation and neurite growth. This Mus musculus (Mouse) protein is Coiled-coil domain-containing protein 120.